The primary structure comprises 472 residues: ATP-dependent protease ATPase subunit HslU (472 aa).

ATP-binding positions include Ile20, 62–67, Asp285, Glu350, and Arg422; that span reads GVGKTE.

This sequence belongs to the ClpX chaperone family. HslU subfamily. In terms of assembly, a double ring-shaped homohexamer of HslV is capped on each side by a ring-shaped HslU homohexamer. The assembly of the HslU/HslV complex is dependent on binding of ATP.

The protein resides in the cytoplasm. ATPase subunit of a proteasome-like degradation complex; this subunit has chaperone activity. The binding of ATP and its subsequent hydrolysis by HslU are essential for unfolding of protein substrates subsequently hydrolyzed by HslV. HslU recognizes the N-terminal part of its protein substrates and unfolds these before they are guided to HslV for hydrolysis. The polypeptide is ATP-dependent protease ATPase subunit HslU (Lactiplantibacillus plantarum (strain ATCC BAA-793 / NCIMB 8826 / WCFS1) (Lactobacillus plantarum)).